The chain runs to 37 residues: MKVRASVKKMCDKCRVIRRHGRVMVICTNPKHKQRQG.

This sequence belongs to the bacterial ribosomal protein bL36 family.

In Parasynechococcus marenigrum (strain WH8102), this protein is Large ribosomal subunit protein bL36.